Reading from the N-terminus, the 315-residue chain is Malate dehydrogenase (315 aa).

NAD(+) is bound by residues 10-15 and aspartate 34; that span reads GSGFTG. Residues arginine 85 and arginine 91 each contribute to the substrate site. Residues asparagine 98 and 121-123 each bind NAD(+); that span reads LTN. Substrate is bound by residues asparagine 123 and arginine 154. The active-site Proton acceptor is the histidine 178.

Belongs to the LDH/MDH superfamily. MDH type 3 family.

It catalyses the reaction (S)-malate + NAD(+) = oxaloacetate + NADH + H(+). Functionally, catalyzes the reversible oxidation of malate to oxaloacetate. This chain is Malate dehydrogenase, found in Symbiobacterium thermophilum (strain DSM 24528 / JCM 14929 / IAM 14863 / T).